Consider the following 128-residue polypeptide: 3-aminoacrylate deaminase RutC (128 aa).

Belongs to the RutC family.

It catalyses the reaction (Z)-3-aminoacrylate + H2O + H(+) = 3-oxopropanoate + NH4(+). Involved in pyrimidine catabolism. Catalyzes the deamination of 3-aminoacrylate to malonic semialdehyde, a reaction that can also occur spontaneously. RutC may facilitate the reaction and modulate the metabolic fitness, rather than catalyzing essential functions. The chain is 3-aminoacrylate deaminase RutC from Agrobacterium fabrum (strain C58 / ATCC 33970) (Agrobacterium tumefaciens (strain C58)).